The sequence spans 206 residues: Riboflavin transporter RibU (206 aa).

The next 6 membrane-spanning stretches (helical) occupy residues 7–27, 42–62, 79–99, 113–133, 147–169, and 173–195; these read MVLIAMLAALSTILLLPILQF, IIPVLIGVFTLGLGDGFIILF, WIGVPMNFVALGIFMAIVWFF, IVLATIASVLVMMVLNVFYAL, IFAGATHLFNMGSLSVTLNPTYL, and VLPFNALQYIIFALVFGLIVTVF.

It belongs to the prokaryotic riboflavin transporter (P-RFT) (TC 2.A.87) family. In terms of assembly, in E.coli forms a stable energy-coupling factor (ECF) transporter complex composed of 2 membrane-embedded substrate-binding protein (S component), 2 ATP-binding proteins (A and A' components) and 2 transmembrane proteins (T component), probably with a stoichiometry of 2:1:1:2. May be able to interact with more than 1 S component at a time.

Its subcellular location is the cell membrane. Its function is as follows. Mediates riboflavin uptake, may also transport FMN and roseoflavin. Probably a riboflavin-binding protein that interacts with the energy-coupling factor (ECF) ABC-transporter complex. Unlike classic ABC transporters this ECF transporter provides the energy necessary to transport a number of different substrates. The substrates themselves are bound by transmembrane, not extracytoplasmic soluble proteins. Uptake of riboflavin into proteosomes containing EcfA1A2T and RibU has been demonstrated. Uptake requires hydrolyzable Mg-ATP. The sequence is that of Riboflavin transporter RibU (ribU) from Lactococcus lactis subsp. cremoris (strain MG1363).